Reading from the N-terminus, the 165-residue chain is Thiol peroxidase (165 aa).

The Thioredoxin domain maps to 18–164 (RKVGDKAPNF…YEAAIEAAKK (147 aa)). The Cysteine sulfenic acid (-SOH) intermediate role is filled by Cys-60. A disulfide bridge links Cys-60 with Cys-94.

This sequence belongs to the peroxiredoxin family. Tpx subfamily. As to quaternary structure, homodimer.

The catalysed reaction is a hydroperoxide + [thioredoxin]-dithiol = an alcohol + [thioredoxin]-disulfide + H2O. In terms of biological role, thiol-specific peroxidase that catalyzes the reduction of hydrogen peroxide and organic hydroperoxides to water and alcohols, respectively. Plays a role in cell protection against oxidative stress by detoxifying peroxides. The polypeptide is Thiol peroxidase (Listeria monocytogenes serotype 4b (strain F2365)).